Consider the following 138-residue polypeptide: ATP synthase epsilon chain (138 aa).

It belongs to the ATPase epsilon chain family. As to quaternary structure, F-type ATPases have 2 components, CF(1) - the catalytic core - and CF(0) - the membrane proton channel. CF(1) has five subunits: alpha(3), beta(3), gamma(1), delta(1), epsilon(1). CF(0) has three main subunits: a, b and c.

The protein localises to the cell membrane. In terms of biological role, produces ATP from ADP in the presence of a proton gradient across the membrane. This Buchnera aphidicola subsp. Acyrthosiphon pisum (strain APS) (Acyrthosiphon pisum symbiotic bacterium) protein is ATP synthase epsilon chain (atpC).